Reading from the N-terminus, the 138-residue chain is Acidic phospholipase A2 1 (138 aa).

Positions 1-16 (MRTLWIMAVLLVGVDG) are cleaved as a signal peptide. Disulfide bonds link C42-C131, C44-C60, C59-C110, C65-C138, C66-C103, C73-C97, and C91-C101. Ca(2+) is bound by residues Y43, G45, and G47. Residue H63 is part of the active site. A Ca(2+)-binding site is contributed by D64. D104 is a catalytic residue.

The protein belongs to the phospholipase A2 family. Group II subfamily. D49 sub-subfamily. Homodimer. Requires Ca(2+) as cofactor. In terms of tissue distribution, expressed by the venom gland.

It is found in the secreted. It carries out the reaction a 1,2-diacyl-sn-glycero-3-phosphocholine + H2O = a 1-acyl-sn-glycero-3-phosphocholine + a fatty acid + H(+). Snake venom phospholipase A2 (PLA2) that is highly lipolytic and myolytic. PLA2 catalyzes the calcium-dependent hydrolysis of the 2-acyl groups in 3-sn-phosphoglycerides. This is Acidic phospholipase A2 1 from Protobothrops flavoviridis (Habu).